Here is a 365-residue protein sequence, read N- to C-terminus: Peptide chain release factor 2 (365 aa).

Residue Gln251 is modified to N5-methylglutamine.

The protein belongs to the prokaryotic/mitochondrial release factor family. Methylated by PrmC. Methylation increases the termination efficiency of RF2.

The protein resides in the cytoplasm. Peptide chain release factor 2 directs the termination of translation in response to the peptide chain termination codons UGA and UAA. This is Peptide chain release factor 2 from Campylobacter jejuni subsp. doylei (strain ATCC BAA-1458 / RM4099 / 269.97).